Reading from the N-terminus, the 241-residue chain is DnaA regulatory inactivator Hda (241 aa).

Belongs to the DnaA family. HdA subfamily. In terms of assembly, the active form seems to be an ADP-bound monomer. Forms the RIDA complex (regulatory inactivation of DnaA) of ATP-DnaA, ADP-Hda and the DNA-loaded beta sliding clamp (dnaN).

In terms of biological role, mediates the interaction of DNA replication initiator protein DnaA with DNA polymerase subunit beta sliding clamp (dnaN). Stimulates hydrolysis of ATP-DnaA to ADP-DnaA, rendering DnaA inactive for reinitiation, a process called regulatory inhibition of DnaA or RIDA. This is DnaA regulatory inactivator Hda from Salmonella paratyphi A (strain ATCC 9150 / SARB42).